The chain runs to 154 residues: S-protein homolog 12 (154 aa).

The signal sequence occupies residues 1–30 (MGTNKIPKTLNGNLVLILIITIMMVTHSHG).

Belongs to the plant self-incompatibility (S1) protein family.

The protein resides in the secreted. The protein is S-protein homolog 12 of Arabidopsis thaliana (Mouse-ear cress).